We begin with the raw amino-acid sequence, 273 residues long: Large ribosomal subunit protein uL2 (273 aa).

Residues 228 to 273 form a disordered region; that stretch reads VDHPHGGGEGKTSGGRHPVTPWGFPTKGKKTRKNKRTSKFIVKKRK. The segment covering 254 to 273 has biased composition (basic residues); it reads KGKKTRKNKRTSKFIVKKRK.

Belongs to the universal ribosomal protein uL2 family. In terms of assembly, part of the 50S ribosomal subunit. Forms a bridge to the 30S subunit in the 70S ribosome.

Functionally, one of the primary rRNA binding proteins. Required for association of the 30S and 50S subunits to form the 70S ribosome, for tRNA binding and peptide bond formation. It has been suggested to have peptidyltransferase activity; this is somewhat controversial. Makes several contacts with the 16S rRNA in the 70S ribosome. The chain is Large ribosomal subunit protein uL2 from Rickettsia felis (strain ATCC VR-1525 / URRWXCal2) (Rickettsia azadi).